The sequence spans 378 residues: Putative glutamate--cysteine ligase 2 (378 aa).

Belongs to the glutamate--cysteine ligase type 2 family. YbdK subfamily.

It carries out the reaction L-cysteine + L-glutamate + ATP = gamma-L-glutamyl-L-cysteine + ADP + phosphate + H(+). In terms of biological role, ATP-dependent carboxylate-amine ligase which exhibits weak glutamate--cysteine ligase activity. The chain is Putative glutamate--cysteine ligase 2 from Pseudomonas paraeruginosa (strain DSM 24068 / PA7) (Pseudomonas aeruginosa (strain PA7)).